A 245-amino-acid polypeptide reads, in one-letter code: Thiopurine S-methyltransferase (245 aa).

29–40 (WREKWVDGKIGF) lines the S-adenosyl-L-methionine pocket. F40 is a binding site for substrate. K58 carries the N6-acetyllysine modification. The S-adenosyl-L-methionine site is built by L69, E90, and R152.

Belongs to the class I-like SAM-binding methyltransferase superfamily. TPMT family. As to quaternary structure, monomer.

The protein resides in the cytoplasm. The catalysed reaction is S-adenosyl-L-methionine + a thiopurine = S-adenosyl-L-homocysteine + a thiopurine S-methylether.. This is Thiopurine S-methyltransferase (TPMT) from Lynx rufus (Bobcat).